Here is a 599-residue protein sequence, read N- to C-terminus: Elongation factor 4 (599 aa).

The tr-type G domain occupies 2–184; it reads KNIRNFSIIA…RLVRDIPPPE (183 aa). Residues 14 to 19 and 131 to 134 each bind GTP; these read DHGKST and NKID.

Belongs to the TRAFAC class translation factor GTPase superfamily. Classic translation factor GTPase family. LepA subfamily.

The protein resides in the cell inner membrane. It catalyses the reaction GTP + H2O = GDP + phosphate + H(+). Functionally, required for accurate and efficient protein synthesis under certain stress conditions. May act as a fidelity factor of the translation reaction, by catalyzing a one-codon backward translocation of tRNAs on improperly translocated ribosomes. Back-translocation proceeds from a post-translocation (POST) complex to a pre-translocation (PRE) complex, thus giving elongation factor G a second chance to translocate the tRNAs correctly. Binds to ribosomes in a GTP-dependent manner. The polypeptide is Elongation factor 4 (Shigella dysenteriae serotype 1 (strain Sd197)).